A 373-amino-acid polypeptide reads, in one-letter code: NAD(P)H-quinone oxidoreductase subunit 1 (373 aa).

8 consecutive transmembrane segments (helical) span residues 28–48 (LLWLPLPMLLVLVAAVVGVLV), 98–118 (LLFTLGPVLVVIPVIISWLII), 129–149 (VGVGIFLWIAFSSIQPIGLLM), 167–187 (AAQSISYEIPLALAVLAIVMM), 205–225 (ILSWNIWRQPVGFLIFWICAL), 267–287 (VLSAVLVSVLYLGGWGFPIPV), 309–329 (SVGIVMTVLKAYLLVFVAILL), and 348–368 (FLLPLSLVNLLVTAALKLAFP).

It belongs to the complex I subunit 1 family. NDH-1 is composed of at least 11 different subunits.

The protein resides in the cellular thylakoid membrane. The enzyme catalyses a plastoquinone + NADH + (n+1) H(+)(in) = a plastoquinol + NAD(+) + n H(+)(out). The catalysed reaction is a plastoquinone + NADPH + (n+1) H(+)(in) = a plastoquinol + NADP(+) + n H(+)(out). Its function is as follows. NDH-1 shuttles electrons from an unknown electron donor, via FMN and iron-sulfur (Fe-S) centers, to quinones in the respiratory and/or the photosynthetic chain. The immediate electron acceptor for the enzyme in this species is believed to be plastoquinone. Couples the redox reaction to proton translocation, and thus conserves the redox energy in a proton gradient. The chain is NAD(P)H-quinone oxidoreductase subunit 1 from Parasynechococcus marenigrum (strain WH8102).